The following is a 1251-amino-acid chain: Centrosomal protein of 162 kDa (1251 aa).

2 stretches are compositionally biased toward basic and acidic residues: residues 1–19 (MLEK…KEEG) and 144–159 (ESEK…KCES). Disordered regions lie at residues 1–33 (MLEK…KEIL), 144–183 (ESEK…QEPN), and 442–473 (LHKK…SIPA). Residues 160–169 (YSEDFEEDTD) show a composition bias toward acidic residues. Residues 457 to 470 (SSGYGKSTSYSKQS) are compositionally biased toward low complexity. Coiled coils occupy residues 559-782 (EREL…VQIT), 813-1165 (YAEN…SQAT), and 1210-1242 (KVAE…QEAL). Residues 1078–1100 (SDNNLRNKTDNKENRQESLKNNT) form a disordered region. Over residues 1082 to 1095 (LRNKTDNKENRQES) the composition is skewed to basic and acidic residues.

The protein belongs to the CEP162 family. In terms of tissue distribution, expressed in retina and brain (at protein level).

It is found in the cytoplasm. The protein resides in the cytoskeleton. It localises to the microtubule organizing center. The protein localises to the centrosome. Its subcellular location is the centriole. It is found in the nucleus. Required to promote assembly of the transition zone in primary cilia. Acts by specifically recognizing and binding the axonemal microtubule. Plays a role in cell proliferation and differentiation in the neuroretina. Has an ATPase activity in vitro. In Coturnix coturnix (Common quail), this protein is Centrosomal protein of 162 kDa (CEP162).